Consider the following 283-residue polypeptide: Protein BASIC PENTACYSTEINE5 (283 aa).

The segment at 51 to 86 (AVKERNEAVAATKEALASRDEALEQRDKALSERDNA) is alanine-zipper. Residues 63 to 89 (KEALASRDEALEQRDKALSERDNAIME) adopt a coiled-coil conformation. Residues 122–176 (EESHLPNPSPISTIPPEAANTRPTKRKKESKQGKKMGEDLNRPVASPGKKSRKDW) are disordered. Residues 151–162 (SKQGKKMGEDLN) show a composition bias toward basic and acidic residues.

It belongs to the BBR/BPC family. As to quaternary structure, homodimer. Heterodimer. As to expression, expressed in seedlings, leaves and pistils.

The protein localises to the nucleus. Transcriptional regulator that specifically binds to GA-rich elements (GAGA-repeats) present in regulatory sequences of genes involved in developmental processes. The polypeptide is Protein BASIC PENTACYSTEINE5 (BPC5) (Arabidopsis thaliana (Mouse-ear cress)).